The primary structure comprises 68 residues: MSRLFKITALVPSLSRTRTQRELQNTYFTKLVPYENWFREQQRIQKAGGKIIKVELATGKQGTNAGLQ.

Residues 2–57 (SRLFKITALVPSLSRTRTQRELQNTYFTKLVPYENWFREQQRIQKAGGKIIKVELA) form the CpcD-like domain.

The protein belongs to the phycobilisome linker protein family.

It localises to the cellular thylakoid membrane. Rod linker protein, associated with allophycocyanin. Linker polypeptides determine the state of aggregation and the location of the disk-shaped phycobiliprotein units within the phycobilisome and modulate their spectroscopic properties in order to mediate a directed and optimal energy transfer. In Nostoc sp. (strain PCC 7120 / SAG 25.82 / UTEX 2576), this protein is Phycobilisome 7.8 kDa linker polypeptide, allophycocyanin-associated, core (apcC).